Reading from the N-terminus, the 262-residue chain is 4-hydroxy-2-oxo-heptane-1,7-dioate aldolase (262 aa).

The active-site Proton acceptor is His45. Position 147 (Gln147) interacts with substrate. Glu149 serves as a coordination point for a divalent metal cation. Positions 174 and 175 each coordinate substrate. Asp175 serves as a coordination point for a divalent metal cation.

Belongs to the HpcH/HpaI aldolase family. In terms of assembly, homohexamer; trimer of dimers. It depends on a divalent metal cation as a cofactor.

The enzyme catalyses 4-hydroxy-2-oxoheptanedioate = succinate semialdehyde + pyruvate. It functions in the pathway aromatic compound metabolism; 4-hydroxyphenylacetate degradation; pyruvate and succinate semialdehyde from 4-hydroxyphenylacetate: step 7/7. Catalyzes the reversible retro-aldol cleavage of 4-hydroxy-2-ketoheptane-1,7-dioate (HKHD) to pyruvate and succinic semialdehyde. The protein is 4-hydroxy-2-oxo-heptane-1,7-dioate aldolase of Shigella sonnei (strain Ss046).